The sequence spans 142 residues: uncharacterized protein (142 aa).

2 consecutive transmembrane segments (helical) span residues 12 to 29 (NAIL…YGLL) and 44 to 66 (IYGQ…GVTA).

The protein localises to the cell membrane. This is an uncharacterized protein from Archaeoglobus fulgidus (strain ATCC 49558 / DSM 4304 / JCM 9628 / NBRC 100126 / VC-16).